The following is an 84-amino-acid chain: Defensin-like protein 199 (84 aa).

Residues 1 to 24 (MAITMRTLVAFVFTIFFIISFVHS) form the signal peptide. 4 disulfide bridges follow: C40–C80, C47–C72, C56–C78, and C60–C79.

This sequence belongs to the DEFL family.

The protein localises to the secreted. The polypeptide is Defensin-like protein 199 (Arabidopsis thaliana (Mouse-ear cress)).